The sequence spans 1260 residues: ATP-dependent helicase/deoxyribonuclease subunit B (1260 aa).

It belongs to the helicase family. AddB/RexB type 2 subfamily. Heterodimer of AddA and RexB. The cofactor is Mg(2+).

Its function is as follows. The heterodimer acts as both an ATP-dependent DNA helicase and an ATP-dependent, dual-direction single-stranded exonuclease. Recognizes the chi site generating a DNA molecule suitable for the initiation of homologous recombination. This subunit has 5' -&gt; 3' nuclease activity but not helicase activity. The polypeptide is ATP-dependent helicase/deoxyribonuclease subunit B (Limosilactobacillus reuteri (strain DSM 20016) (Lactobacillus reuteri)).